A 258-amino-acid polypeptide reads, in one-letter code: Imidazole glycerol phosphate synthase subunit HisF (258 aa).

Catalysis depends on residues Asp-11 and Asp-130.

The protein belongs to the HisA/HisF family. In terms of assembly, heterodimer of HisH and HisF.

Its subcellular location is the cytoplasm. It carries out the reaction 5-[(5-phospho-1-deoxy-D-ribulos-1-ylimino)methylamino]-1-(5-phospho-beta-D-ribosyl)imidazole-4-carboxamide + L-glutamine = D-erythro-1-(imidazol-4-yl)glycerol 3-phosphate + 5-amino-1-(5-phospho-beta-D-ribosyl)imidazole-4-carboxamide + L-glutamate + H(+). The protein operates within amino-acid biosynthesis; L-histidine biosynthesis; L-histidine from 5-phospho-alpha-D-ribose 1-diphosphate: step 5/9. IGPS catalyzes the conversion of PRFAR and glutamine to IGP, AICAR and glutamate. The HisF subunit catalyzes the cyclization activity that produces IGP and AICAR from PRFAR using the ammonia provided by the HisH subunit. The polypeptide is Imidazole glycerol phosphate synthase subunit HisF (Xanthomonas axonopodis pv. citri (strain 306)).